Reading from the N-terminus, the 465-residue chain is UDP-N-acetylmuramoylalanine--D-glutamate ligase (465 aa).

116–122 (GTNGKTT) is an ATP binding site.

The protein belongs to the MurCDEF family.

It is found in the cytoplasm. It carries out the reaction UDP-N-acetyl-alpha-D-muramoyl-L-alanine + D-glutamate + ATP = UDP-N-acetyl-alpha-D-muramoyl-L-alanyl-D-glutamate + ADP + phosphate + H(+). It functions in the pathway cell wall biogenesis; peptidoglycan biosynthesis. Cell wall formation. Catalyzes the addition of glutamate to the nucleotide precursor UDP-N-acetylmuramoyl-L-alanine (UMA). In Thermobifida fusca (strain YX), this protein is UDP-N-acetylmuramoylalanine--D-glutamate ligase.